The primary structure comprises 36 residues: uncharacterized protein (36 aa).

Residues 13 to 35 (SVILSPFPCCVLKSYLTVIYISF) traverse the membrane as a helical segment.

Its subcellular location is the host membrane. This is an uncharacterized protein from Pseudoalteromonas espejiana (Bacteriophage PM2).